Reading from the N-terminus, the 361-residue chain is Peptide chain release factor 1 (361 aa).

An N5-methylglutamine modification is found at Gln-235.

This sequence belongs to the prokaryotic/mitochondrial release factor family. In terms of processing, methylated by PrmC. Methylation increases the termination efficiency of RF1.

The protein localises to the cytoplasm. Its function is as follows. Peptide chain release factor 1 directs the termination of translation in response to the peptide chain termination codons UAG and UAA. The sequence is that of Peptide chain release factor 1 from Xanthomonas campestris pv. campestris (strain B100).